Reading from the N-terminus, the 353-residue chain is 3'(2'),5'-bisphosphate nucleotidase (353 aa).

The active-site Proton acceptor is Asp50. Residues Glu73, Asp136, Ile138, and Asp139 each coordinate Mg(2+). The active-site Proton acceptor is Thr141. Positions 141, 232, 256, 259, 273, and 286 each coordinate adenosine 3',5'-bisphosphate. AMP-binding residues include His232, Ser256, Lys259, Arg273, and Asp286. Asp286 is a Mg(2+) binding site.

This sequence belongs to the inositol monophosphatase superfamily. Mg(2+) serves as cofactor.

It catalyses the reaction 3'-phosphoadenylyl sulfate + H2O = adenosine 5'-phosphosulfate + phosphate. The enzyme catalyses adenosine 3',5'-bisphosphate + H2O = AMP + phosphate. The catalysed reaction is adenosine 2',5'-bisphosphate + H2O = AMP + phosphate. It carries out the reaction 1D-myo-inositol 1,4-bisphosphate + H2O = 1D-myo-inositol 4-phosphate + phosphate. It catalyses the reaction 1D-myo-inositol 1,3,4-trisphosphate + H2O = 1D-myo-inositol 3,4-bisphosphate + phosphate. With respect to regulation, inhibited by Li(+) and Na(+). In terms of biological role, phosphatase that converts adenosine 3'-phosphate 5'-phosphosulfate (PAPS) to adenosine 5'-phosphosulfate (APS) and 3'(2')-phosphoadenosine 5'-phosphate (PAP) to AMP. May regulate the flux of sulfur in the sulfur-activation pathway by converting PAPS to APS. Is also able to hydrolyze inositol 1,4-bisphosphate (Ins(1,4)P2) and inositol 1,3,4-trisphosphate (Ins(1,3,4)P3), but is not active on inositol 1,4,5-trisphosphate, inositol 1-phosphate, fructose 1,6-bisphosphate, AMP and ATP. Its function is as follows. Confers resistance to lithium. The chain is 3'(2'),5'-bisphosphate nucleotidase (tol1) from Schizosaccharomyces pombe (strain 972 / ATCC 24843) (Fission yeast).